The primary structure comprises 67 residues: Small ribosomal subunit protein eS27 (67 aa).

Positions 22, 25, 41, and 44 each coordinate Zn(2+). A C4-type zinc finger spans residues 22-44 (CPDCGNEQVVFSHAAMVVRCLVC).

The protein belongs to the eukaryotic ribosomal protein eS27 family. As to quaternary structure, part of the 30S ribosomal subunit. It depends on Zn(2+) as a cofactor.

In Pyrobaculum islandicum (strain DSM 4184 / JCM 9189 / GEO3), this protein is Small ribosomal subunit protein eS27.